The following is a 454-amino-acid chain: tRNA modification GTPase MnmE (454 aa).

(6S)-5-formyl-5,6,7,8-tetrahydrofolate is bound by residues arginine 23, glutamate 80, and lysine 120. In terms of domain architecture, TrmE-type G spans 216-377; that stretch reads GMKVVIAGRP…LRDHLKQSMG (162 aa). A K(+)-binding site is contributed by asparagine 226. GTP is bound by residues 226–231, 245–251, 270–273, 335–338, and 358–360; these read NAGKSS, TDIAGTT, DTAG, NKAD, and SAR. Serine 230 is a binding site for Mg(2+). Residues threonine 245, isoleucine 247, and threonine 250 each coordinate K(+). Position 251 (threonine 251) interacts with Mg(2+). A (6S)-5-formyl-5,6,7,8-tetrahydrofolate-binding site is contributed by lysine 454.

It belongs to the TRAFAC class TrmE-Era-EngA-EngB-Septin-like GTPase superfamily. TrmE GTPase family. In terms of assembly, homodimer. Heterotetramer of two MnmE and two MnmG subunits. K(+) serves as cofactor.

The protein resides in the cytoplasm. Exhibits a very high intrinsic GTPase hydrolysis rate. Involved in the addition of a carboxymethylaminomethyl (cmnm) group at the wobble position (U34) of certain tRNAs, forming tRNA-cmnm(5)s(2)U34. The sequence is that of tRNA modification GTPase MnmE from Yersinia pseudotuberculosis serotype O:1b (strain IP 31758).